The sequence spans 154 residues: MAARLCCQLDPARDVLCLRPVSAESCGRSVSGSLGDLSSPSPSAVPADHGAHLSLRGLPVCAFSSAGPCALRFTSARRMETTVNAHQILPKVLHKRTLGLSAMSTTDLEAYFKACLFKDWEELGEEIRLKIFVLGGCRHKLVCAPAPCNFFTSA.

Residues 68–117 form a mitochondrial targeting sequence region; sequence PCALRFTSARRMETTVNAHQILPKVLHKRTLGLSAMSTTDLEAYFKACLF.

It belongs to the orthohepadnavirus protein X family. As to quaternary structure, may form homodimer. May interact with host CEBPA, CFLAR, CREB1, DDB1, E4F1, HBXIP, HSPD1/HSP60, NFKBIA, POLR2E and SMAD4. Interacts with host SMC5-SMC6 complex and induces its degradation. Interacts with host TRPC4AP; leading to prevent ubiquitination of TRPC4AP. Interacts with host PLSCR1; this interaction promotes ubiquitination and degradation of HBx and impairs HBx-mediated cell proliferation. In terms of processing, a fraction may be phosphorylated in insect cells and HepG2 cells, a human hepatoblastoma cell line. Phosphorylated in vitro by host protein kinase C or mitogen-activated protein kinase. N-acetylated in insect cells.

The protein localises to the host cytoplasm. Its subcellular location is the host nucleus. The protein resides in the host mitochondrion. Functionally, multifunctional protein that plays a role in silencing host antiviral defenses and promoting viral transcription. Does not seem to be essential for HBV infection. May be directly involved in development of cirrhosis and liver cancer (hepatocellular carcinoma). Most of cytosolic activities involve modulation of cytosolic calcium. The effect on apoptosis is controversial depending on the cell types in which the studies have been conducted. May induce apoptosis by localizing in mitochondria and causing loss of mitochondrial membrane potential. May also modulate apoptosis by binding host CFLAR, a key regulator of the death-inducing signaling complex (DISC). Promotes viral transcription by using the host E3 ubiquitin ligase DDB1 to target the SMC5-SMC6 complex to proteasomal degradation. This host complex would otherwise bind to viral episomal DNA, and prevents its transcription. Moderately stimulates transcription of many different viral and cellular transcription elements. Promoters and enhancers stimulated by HBx contain DNA binding sites for NF-kappa-B, AP-1, AP-2, c-EBP, ATF/CREB, or the calcium-activated factor NF-AT. In Hepatitis B virus genotype E (isolate Cote d'Ivoire/ABI-129/2003) (HBV-E), this protein is Protein X.